The sequence spans 59 residues: UPF0434 protein RHOS4_00640 (59 aa).

It belongs to the UPF0434 family.

This is UPF0434 protein RHOS4_00640 from Cereibacter sphaeroides (strain ATCC 17023 / DSM 158 / JCM 6121 / CCUG 31486 / LMG 2827 / NBRC 12203 / NCIMB 8253 / ATH 2.4.1.) (Rhodobacter sphaeroides).